We begin with the raw amino-acid sequence, 456 residues long: Bifunctional protein GlmU (456 aa).

The segment at 1-229 (MSNSAMSVVI…LSEVEGVNNR (229 aa)) is pyrophosphorylase. UDP-N-acetyl-alpha-D-glucosamine-binding positions include 11–14 (LAAG), Lys-25, Gln-76, 81–82 (GT), 103–105 (YGD), Gly-140, Glu-154, Asn-169, and Asn-227. Asp-105 contacts Mg(2+). Position 227 (Asn-227) interacts with Mg(2+). The interval 230–250 (LQLSALERVYQREQADRLLLA) is linker. Residues 251–456 (GVMLLDPARF…SGWQRPVKKK (206 aa)) form an N-acetyltransferase region. Positions 333 and 351 each coordinate UDP-N-acetyl-alpha-D-glucosamine. Catalysis depends on His-363, which acts as the Proton acceptor. Residues Tyr-366 and Asn-377 each contribute to the UDP-N-acetyl-alpha-D-glucosamine site. Acetyl-CoA is bound by residues Ala-380, 386 to 387 (NY), Ser-405, Ala-423, and Arg-440.

In the N-terminal section; belongs to the N-acetylglucosamine-1-phosphate uridyltransferase family. The protein in the C-terminal section; belongs to the transferase hexapeptide repeat family. As to quaternary structure, homotrimer. Requires Mg(2+) as cofactor.

The protein localises to the cytoplasm. The enzyme catalyses alpha-D-glucosamine 1-phosphate + acetyl-CoA = N-acetyl-alpha-D-glucosamine 1-phosphate + CoA + H(+). It carries out the reaction N-acetyl-alpha-D-glucosamine 1-phosphate + UTP + H(+) = UDP-N-acetyl-alpha-D-glucosamine + diphosphate. The protein operates within nucleotide-sugar biosynthesis; UDP-N-acetyl-alpha-D-glucosamine biosynthesis; N-acetyl-alpha-D-glucosamine 1-phosphate from alpha-D-glucosamine 6-phosphate (route II): step 2/2. It participates in nucleotide-sugar biosynthesis; UDP-N-acetyl-alpha-D-glucosamine biosynthesis; UDP-N-acetyl-alpha-D-glucosamine from N-acetyl-alpha-D-glucosamine 1-phosphate: step 1/1. It functions in the pathway bacterial outer membrane biogenesis; LPS lipid A biosynthesis. In terms of biological role, catalyzes the last two sequential reactions in the de novo biosynthetic pathway for UDP-N-acetylglucosamine (UDP-GlcNAc). The C-terminal domain catalyzes the transfer of acetyl group from acetyl coenzyme A to glucosamine-1-phosphate (GlcN-1-P) to produce N-acetylglucosamine-1-phosphate (GlcNAc-1-P), which is converted into UDP-GlcNAc by the transfer of uridine 5-monophosphate (from uridine 5-triphosphate), a reaction catalyzed by the N-terminal domain. This Pectobacterium carotovorum subsp. carotovorum (strain PC1) protein is Bifunctional protein GlmU.